Reading from the N-terminus, the 126-residue chain is Aspartate 1-decarboxylase 2 (126 aa).

S25 functions as the Schiff-base intermediate with substrate; via pyruvic acid in the catalytic mechanism. S25 carries the post-translational modification Pyruvic acid (Ser). Residue T57 participates in substrate binding. Catalysis depends on Y58, which acts as the Proton donor. 73-75 (GSA) lines the substrate pocket.

The protein belongs to the PanD family. In terms of assembly, heterooctamer of four alpha and four beta subunits. It depends on pyruvate as a cofactor. Is synthesized initially as an inactive proenzyme, which is activated by self-cleavage at a specific serine bond to produce a beta-subunit with a hydroxyl group at its C-terminus and an alpha-subunit with a pyruvoyl group at its N-terminus.

It is found in the cytoplasm. The catalysed reaction is L-aspartate + H(+) = beta-alanine + CO2. It functions in the pathway cofactor biosynthesis; (R)-pantothenate biosynthesis; beta-alanine from L-aspartate: step 1/1. Catalyzes the pyruvoyl-dependent decarboxylation of aspartate to produce beta-alanine. In Polaromonas sp. (strain JS666 / ATCC BAA-500), this protein is Aspartate 1-decarboxylase 2.